Consider the following 434-residue polypeptide: Histidinol dehydrogenase (434 aa).

NAD(+) is bound by residues Tyr129, Gln191, and Asn214. Substrate contacts are provided by Ser240, Gln262, and His265. Residues Gln262 and His265 each contribute to the Zn(2+) site. Catalysis depends on proton acceptor residues Glu329 and His330. Residues His330, Asp363, Glu417, and His422 each coordinate substrate. Asp363 is a binding site for Zn(2+). Position 422 (His422) interacts with Zn(2+).

Belongs to the histidinol dehydrogenase family. The cofactor is Zn(2+).

It catalyses the reaction L-histidinol + 2 NAD(+) + H2O = L-histidine + 2 NADH + 3 H(+). It functions in the pathway amino-acid biosynthesis; L-histidine biosynthesis; L-histidine from 5-phospho-alpha-D-ribose 1-diphosphate: step 9/9. Functionally, catalyzes the sequential NAD-dependent oxidations of L-histidinol to L-histidinaldehyde and then to L-histidine. This chain is Histidinol dehydrogenase, found in Colwellia psychrerythraea (strain 34H / ATCC BAA-681) (Vibrio psychroerythus).